The sequence spans 488 residues: Acetyl-coenzyme A carboxylase carboxyl transferase subunit beta, chloroplastic (488 aa).

One can recognise a CoA carboxyltransferase N-terminal domain in the interval 227 to 488 (LWIQCDNCYG…LHAFFPLNTN (262 aa)). Residues Cys231, Cys234, Cys247, and Cys250 each contribute to the Zn(2+) site. The C4-type zinc finger occupies 231–250 (CDNCYGLMYKKVKMNVCEQC).

It belongs to the AccD/PCCB family. As to quaternary structure, acetyl-CoA carboxylase is a heterohexamer composed of biotin carboxyl carrier protein, biotin carboxylase and 2 subunits each of ACCase subunit alpha and ACCase plastid-coded subunit beta (accD). Requires Zn(2+) as cofactor. In terms of tissue distribution, accumulates in fatty acids synthesizing tissues such as embryos, expanding leaves, flower buds, flowers, and developing siliques.

The protein resides in the plastid. Its subcellular location is the chloroplast membrane. The protein localises to the chloroplast stroma. The catalysed reaction is N(6)-carboxybiotinyl-L-lysyl-[protein] + acetyl-CoA = N(6)-biotinyl-L-lysyl-[protein] + malonyl-CoA. It participates in lipid metabolism; malonyl-CoA biosynthesis; malonyl-CoA from acetyl-CoA: step 1/1. Component of the acetyl coenzyme A carboxylase (ACC) complex. Biotin carboxylase (BC) catalyzes the carboxylation of biotin on its carrier protein (BCCP) and then the CO(2) group is transferred by the transcarboxylase to acetyl-CoA to form malonyl-CoA. This chain is Acetyl-coenzyme A carboxylase carboxyl transferase subunit beta, chloroplastic, found in Arabidopsis thaliana (Mouse-ear cress).